A 333-amino-acid polypeptide reads, in one-letter code: Phosphate acyltransferase (333 aa).

The protein belongs to the PlsX family. Homodimer. Probably interacts with PlsY.

It is found in the cytoplasm. The enzyme catalyses a fatty acyl-[ACP] + phosphate = an acyl phosphate + holo-[ACP]. It functions in the pathway lipid metabolism; phospholipid metabolism. Its function is as follows. Catalyzes the reversible formation of acyl-phosphate (acyl-PO(4)) from acyl-[acyl-carrier-protein] (acyl-ACP). This enzyme utilizes acyl-ACP as fatty acyl donor, but not acyl-CoA. The sequence is that of Phosphate acyltransferase from Lactobacillus gasseri (strain ATCC 33323 / DSM 20243 / BCRC 14619 / CIP 102991 / JCM 1131 / KCTC 3163 / NCIMB 11718 / NCTC 13722 / AM63).